A 494-amino-acid chain; its full sequence is ATP synthase subunit beta, plastid (494 aa).

169-176 serves as a coordination point for ATP; the sequence is GGAGVGKT.

The protein belongs to the ATPase alpha/beta chains family. In terms of assembly, F-type ATPases have 2 components, CF(1) - the catalytic core - and CF(0) - the membrane proton channel. CF(1) has five subunits: alpha(3), beta(3), gamma(1), delta(1), epsilon(1). CF(0) has four main subunits: a(1), b(1), b'(1) and c(9-12).

It localises to the plastid membrane. The catalysed reaction is ATP + H2O + 4 H(+)(in) = ADP + phosphate + 5 H(+)(out). In terms of biological role, produces ATP from ADP in the presence of a proton gradient across the membrane. The catalytic sites are hosted primarily by the beta subunits. This is ATP synthase subunit beta, plastid (atpB) from Cuscuta sandwichiana (Kauna'oa).